The following is a 212-amino-acid chain: B3 domain-containing protein Os04g0386900 (212 aa).

Positions 1 to 78 (MRAATALPSI…PRPPEPEPEK (78 aa)) are disordered. Composition is skewed to low complexity over residues 8-23 (PSIP…ASDP) and 36-46 (DAGAEDPAAVD). A DNA-binding region (TF-B3) is located at residues 93 to 191 (FTCIMCKSHV…EFRVQVLRAE (99 aa)).

Its subcellular location is the nucleus. The chain is B3 domain-containing protein Os04g0386900 from Oryza sativa subsp. japonica (Rice).